The chain runs to 262 residues: MDGKLRADEVAVTKSILKSTFNMWMDIIDVDVVIIGAGPSGLTAAKYLAQNGVKTVVLERHLSFGGGTWGGGMGFPNIVVEKPADEILREAGIKLDEVDGEDELFTADSVEVPAKLGVAAIDAGAKILTGIVVEDLILKEDKIAGVVIQSYAIEKAGLHIDPLTISAKYVIDSTGHDASAVHTLARKNKDLGIEVPGEKSMWAEKGENSLTRNTREIFPGLYVCGMAANAYHAGYRMGAIFGGMYLSGKKCAEMILEKLENK.

NAD(+) contacts are provided by residues serine 40, 59-60 (ER), glycine 67, valine 133, and 159-161 (HID). Residues aspartate 161 and histidine 176 each coordinate Fe cation. NAD(+) contacts are provided by serine 179 and methionine 226. A glycine-binding site is contributed by arginine 236.

This sequence belongs to the THI4 family. Homooctamer; tetramer of dimers. It depends on Fe(2+) as a cofactor.

The enzyme catalyses hydrogen sulfide + glycine + NAD(+) = ADP-5-ethyl-4-methylthiazole-2-carboxylate + nicotinamide + 3 H2O + H(+). It participates in cofactor biosynthesis; thiamine diphosphate biosynthesis. Its function is as follows. Involved in the biosynthesis of the thiazole moiety of thiamine. Catalyzes the conversion of NAD and glycine to adenosine diphosphate 5-(2-hydroxyethyl)-4-methylthiazole-2-carboxylate (ADT), an adenylated thiazole intermediate, using free sulfide as a source of sulfur. The polypeptide is Thiamine thiazole synthase (Methanococcus maripaludis (strain C7 / ATCC BAA-1331)).